A 594-amino-acid polypeptide reads, in one-letter code: Proline--tRNA ligase (594 aa).

Belongs to the class-II aminoacyl-tRNA synthetase family. ProS type 1 subfamily. Homodimer.

It is found in the cytoplasm. The catalysed reaction is tRNA(Pro) + L-proline + ATP = L-prolyl-tRNA(Pro) + AMP + diphosphate. Functionally, catalyzes the attachment of proline to tRNA(Pro) in a two-step reaction: proline is first activated by ATP to form Pro-AMP and then transferred to the acceptor end of tRNA(Pro). As ProRS can inadvertently accommodate and process non-cognate amino acids such as alanine and cysteine, to avoid such errors it has two additional distinct editing activities against alanine. One activity is designated as 'pretransfer' editing and involves the tRNA(Pro)-independent hydrolysis of activated Ala-AMP. The other activity is designated 'posttransfer' editing and involves deacylation of mischarged Ala-tRNA(Pro). The misacylated Cys-tRNA(Pro) is not edited by ProRS. The polypeptide is Proline--tRNA ligase (Synechococcus sp. (strain WH7803)).